The sequence spans 1005 residues: uncharacterized protein (1005 aa).

The N-terminal stretch at 1-24 (MKFQRKYWGLLSTLGVSSAVALSA) is a signal peptide. A lipid anchor (N-palmitoyl cysteine) is attached at C25. Residue C25 is the site of S-diacylglycerol cysteine attachment. 2 disordered regions span residues 105–165 (KKDK…EEKF) and 786–825 (TQKIDQQNTASTTSDVTVKKADSSQDSSKSNTEEEKWDDV). Low complexity-rich tracts occupy residues 110–131 (TSSQKTSTNSSCTTTSSGTSTS) and 145–156 (QSSSNGQNNQQS). Polar residues predominate over residues 786–801 (TQKIDQQNTASTTSDV).

It localises to the cell membrane. This is an uncharacterized protein from Mycoplasma pneumoniae (strain ATCC 29342 / M129 / Subtype 1) (Mycoplasmoides pneumoniae).